The primary structure comprises 60 residues: Large ribosomal subunit protein uL30 (60 aa).

It belongs to the universal ribosomal protein uL30 family. Part of the 50S ribosomal subunit.

In Xanthobacter autotrophicus (strain ATCC BAA-1158 / Py2), this protein is Large ribosomal subunit protein uL30.